The following is a 721-amino-acid chain: Catalase-peroxidase (721 aa).

Positions 95-223 (WHSAGSYRLF…LGAVHMGLIY (129 aa)) form a cross-link, tryptophyl-tyrosyl-methioninium (Trp-Tyr) (with M-249). His96 acts as the Proton acceptor in catalysis. The tryptophyl-tyrosyl-methioninium (Tyr-Met) (with W-95) cross-link spans 223–249 (YVNPQGRDGKPDPLKSAHDVRVTFKRM). A heme b-binding site is contributed by His264.

The protein belongs to the peroxidase family. Peroxidase/catalase subfamily. As to quaternary structure, homodimer or homotetramer. Heme b is required as a cofactor. Post-translationally, formation of the three residue Trp-Tyr-Met cross-link is important for the catalase, but not the peroxidase activity of the enzyme.

It carries out the reaction H2O2 + AH2 = A + 2 H2O. The catalysed reaction is 2 H2O2 = O2 + 2 H2O. Its function is as follows. Bifunctional enzyme with both catalase and broad-spectrum peroxidase activity. This Parvibaculum lavamentivorans (strain DS-1 / DSM 13023 / NCIMB 13966) protein is Catalase-peroxidase.